We begin with the raw amino-acid sequence, 179 residues long: Inner membrane-spanning protein YciB (179 aa).

5 consecutive transmembrane segments (helical) span residues isoleucine 22–valine 42, methionine 50–asparagine 70, tryptophan 76–methionine 96, leucine 121–leucine 141, and phenylalanine 149–isoleucine 169.

It belongs to the YciB family.

It is found in the cell inner membrane. Functionally, plays a role in cell envelope biogenesis, maintenance of cell envelope integrity and membrane homeostasis. The protein is Inner membrane-spanning protein YciB of Klebsiella pneumoniae (strain 342).